Consider the following 185-residue polypeptide: Ribosome-recycling factor (185 aa).

The protein belongs to the RRF family.

Its subcellular location is the cytoplasm. Functionally, responsible for the release of ribosomes from messenger RNA at the termination of protein biosynthesis. May increase the efficiency of translation by recycling ribosomes from one round of translation to another. The polypeptide is Ribosome-recycling factor (Syntrophobacter fumaroxidans (strain DSM 10017 / MPOB)).